The sequence spans 50 residues: Toxic protein HokC (50 aa).

The Cytoplasmic portion of the chain corresponds to 1–5 (MKQHK). Residues 6–24 (AMIVALIVICITAVVAALV) form a helical; Signal-anchor for type II membrane protein membrane-spanning segment. Topologically, residues 25 to 50 (TRKDLCEVHIRTGQTEVAVFTAYESE) are periplasmic.

It belongs to the Hok/Gef family. In terms of assembly, homodimer; disulfide-linked.

The protein localises to the cell inner membrane. In terms of biological role, toxic component of a type I toxin-antitoxin (TA) system. When overexpressed kills cells within minutes; causes collapse of the transmembrane potential and arrest of respiration. Its toxic effect is probably neutralized by antisense antitoxin RNA SokC. The polypeptide is Toxic protein HokC (Escherichia coli (strain K12)).